The chain runs to 478 residues: Transposase for insertion sequence element IS231E (478 aa).

The protein belongs to the transposase 11 family.

Its function is as follows. Involved in the transposition of the insertion sequence. The polypeptide is Transposase for insertion sequence element IS231E (Bacillus thuringiensis subsp. finitimus).